The chain runs to 303 residues: Glycine betaine/carnitine/choline-binding protein OpuCC (303 aa).

An N-terminal signal peptide occupies residues 1-20; the sequence is MTKIKWLGAFALVFVMLLGG. Cysteine 21 carries N-palmitoyl cysteine lipidation. Cysteine 21 carries S-diacylglycerol cysteine lipidation.

This sequence belongs to the OsmX family. In terms of assembly, the complex is composed of two ATP-binding proteins (OpuCA), two transmembrane proteins (OpuCB and OpuCD) and a solute-binding protein (OpuCC).

Its subcellular location is the cell membrane. Member of a high affinity multicomponent binding-protein-dependent transport system for glycine betaine, carnitine, and choline. This Bacillus subtilis (strain 168) protein is Glycine betaine/carnitine/choline-binding protein OpuCC (opuCC).